The primary structure comprises 208 residues: Uracil phosphoribosyltransferase (208 aa).

Residues arginine 78, arginine 103, and 130–138 (DPMLATGGS) contribute to the 5-phospho-alpha-D-ribose 1-diphosphate site. Uracil-binding positions include isoleucine 193 and 198–200 (GDA). A 5-phospho-alpha-D-ribose 1-diphosphate-binding site is contributed by aspartate 199.

The protein belongs to the UPRTase family. The cofactor is Mg(2+).

The enzyme catalyses UMP + diphosphate = 5-phospho-alpha-D-ribose 1-diphosphate + uracil. It participates in pyrimidine metabolism; UMP biosynthesis via salvage pathway; UMP from uracil: step 1/1. Allosterically activated by GTP. Catalyzes the conversion of uracil and 5-phospho-alpha-D-ribose 1-diphosphate (PRPP) to UMP and diphosphate. The chain is Uracil phosphoribosyltransferase from Acholeplasma laidlawii (strain PG-8A).